We begin with the raw amino-acid sequence, 245 residues long: Geranylgeranylglyceryl phosphate synthase (245 aa).

D20 and S50 together coordinate Mg(2+). Residues 169–175 (YLEAGSG), 202–203 (GG), and 224–225 (GT) contribute to the sn-glycerol 1-phosphate site.

It belongs to the GGGP/HepGP synthase family. Group II subfamily. Mg(2+) is required as a cofactor.

The protein localises to the cytoplasm. It carries out the reaction sn-glycerol 1-phosphate + (2E,6E,10E)-geranylgeranyl diphosphate = sn-3-O-(geranylgeranyl)glycerol 1-phosphate + diphosphate. It functions in the pathway membrane lipid metabolism; glycerophospholipid metabolism. In terms of biological role, prenyltransferase that catalyzes the transfer of the geranylgeranyl moiety of geranylgeranyl diphosphate (GGPP) to the C3 hydroxyl of sn-glycerol-1-phosphate (G1P). This reaction is the first ether-bond-formation step in the biosynthesis of archaeal membrane lipids. The sequence is that of Geranylgeranylglyceryl phosphate synthase from Ignicoccus hospitalis (strain KIN4/I / DSM 18386 / JCM 14125).